The primary structure comprises 594 residues: NADH-quinone oxidoreductase subunit C/D (594 aa).

Residues 1–185 (MTTGSALYIP…DPFSLNLAKQ (185 aa)) form an NADH dehydrogenase I subunit C region. The tract at residues 209–594 (DYMFLNLGPN…IDFVMADVDR (386 aa)) is NADH dehydrogenase I subunit D.

In the N-terminal section; belongs to the complex I 30 kDa subunit family. This sequence in the C-terminal section; belongs to the complex I 49 kDa subunit family. NDH-1 is composed of 13 different subunits. Subunits NuoB, CD, E, F, and G constitute the peripheral sector of the complex.

Its subcellular location is the cell inner membrane. It catalyses the reaction a quinone + NADH + 5 H(+)(in) = a quinol + NAD(+) + 4 H(+)(out). Functionally, NDH-1 shuttles electrons from NADH, via FMN and iron-sulfur (Fe-S) centers, to quinones in the respiratory chain. The immediate electron acceptor for the enzyme in this species is believed to be ubiquinone. Couples the redox reaction to proton translocation (for every two electrons transferred, four hydrogen ions are translocated across the cytoplasmic membrane), and thus conserves the redox energy in a proton gradient. This chain is NADH-quinone oxidoreductase subunit C/D, found in Pseudomonas fluorescens (strain Pf0-1).